The primary structure comprises 397 residues: Multidrug efflux pump subunit AcrA (397 aa).

A signal peptide spans 1 to 24 (MNKNRGFTPLAVVLMLSGSLALTG). Cys25 is lipidated: N-palmitoyl cysteine. Cys25 carries the S-diacylglycerol cysteine lipid modification. A coiled-coil region spans residues 98–172 (PATYQATYDS…AVETARINLA (75 aa)). The tract at residues 377-397 (EVTADNNQQAASGAQPEQSKS) is disordered. The segment covering 379 to 397 (TADNNQQAASGAQPEQSKS) has biased composition (polar residues).

Belongs to the membrane fusion protein (MFP) (TC 8.A.1) family. In terms of assembly, monomeric in solution. Homotrimeric; interacts independently with AcrB and TolC as well as AcrZ. Part of the AcrA-AcrB-TolC efflux pump.

It is found in the cell inner membrane. Functionally, acrA-AcrB-AcrZ-TolC is a drug efflux protein complex with broad substrate specificity that uses the proton motive force to export substrates. This subunit may act as an adapter protein that links AcrB and TolC stably together. The protein is Multidrug efflux pump subunit AcrA (acrA) of Escherichia coli O157:H7.